Consider the following 585-residue polypeptide: Pyruvate kinase (585 aa).

Arg-32 serves as a coordination point for substrate. Residues Asn-34, Ser-36, Asp-66, and Thr-67 each coordinate K(+). 34–37 lines the ATP pocket; it reads NFSH. Residues Arg-73 and Lys-156 each coordinate ATP. Residue Glu-221 coordinates Mg(2+). Positions 244, 245, and 277 each coordinate substrate. Asp-245 provides a ligand contact to Mg(2+).

It belongs to the pyruvate kinase family. The protein in the C-terminal section; belongs to the PEP-utilizing enzyme family. It depends on Mg(2+) as a cofactor. Requires K(+) as cofactor.

The catalysed reaction is pyruvate + ATP = phosphoenolpyruvate + ADP + H(+). Its pathway is carbohydrate degradation; glycolysis; pyruvate from D-glyceraldehyde 3-phosphate: step 5/5. This is Pyruvate kinase (pyk) from Staphylococcus epidermidis (strain ATCC 35984 / DSM 28319 / BCRC 17069 / CCUG 31568 / BM 3577 / RP62A).